Here is a 502-residue protein sequence, read N- to C-terminus: Ribose import ATP-binding protein RbsA (502 aa).

ABC transporter domains lie at 6–242 (IDMT…IARD) and 253–496 (ALGA…SGAR). 38–45 (GQNGAGKS) contributes to the ATP binding site.

The protein belongs to the ABC transporter superfamily. Ribose importer (TC 3.A.1.2.1) family. As to quaternary structure, the complex is composed of an ATP-binding protein (RbsA), two transmembrane proteins (RbsC) and a solute-binding protein (RbsB).

It localises to the cell inner membrane. The catalysed reaction is D-ribose(out) + ATP + H2O = D-ribose(in) + ADP + phosphate + H(+). Functionally, part of the ABC transporter complex RbsABC involved in ribose import. Responsible for energy coupling to the transport system. This chain is Ribose import ATP-binding protein RbsA, found in Cereibacter sphaeroides (strain ATCC 17023 / DSM 158 / JCM 6121 / CCUG 31486 / LMG 2827 / NBRC 12203 / NCIMB 8253 / ATH 2.4.1.) (Rhodobacter sphaeroides).